The following is a 177-amino-acid chain: Large ribosomal subunit protein uL6 (177 aa).

It belongs to the universal ribosomal protein uL6 family. As to quaternary structure, part of the 50S ribosomal subunit.

This protein binds to the 23S rRNA, and is important in its secondary structure. It is located near the subunit interface in the base of the L7/L12 stalk, and near the tRNA binding site of the peptidyltransferase center. The protein is Large ribosomal subunit protein uL6 of Acinetobacter baumannii (strain SDF).